A 475-amino-acid polypeptide reads, in one-letter code: Neuronal acetylcholine receptor subunit alpha-5 (475 aa).

The N-terminal stretch at 1–29 (MAAPGWGRWVLGLGPLLLQVFLPFQLVAG) is a signal peptide. Residues 30–261 (RWGPEGAGGG…VIKRLPLFYT (232 aa)) are Extracellular-facing. Cys-177 and Cys-191 are disulfide-bonded. 2 N-linked (GlcNAc...) asparagine glycosylation sites follow: Asn-190 and Asn-236. Cys-241 and Cys-242 form a disulfide bridge. 3 helical membrane-spanning segments follow: residues 262–282 (LFLI…FYLP), 289–309 (ICLC…IEEI), and 324–344 (LVFT…AINI). Residues 345-437 (HHRSSSTHDA…KFIAQVLDRM (93 aa)) lie on the Cytoplasmic side of the membrane. A helical transmembrane segment spans residues 438-458 (FLWTFLLVSVVGSLGLFVPVI). The Extracellular segment spans residues 459–475 (YKWANIIVPIHIGNENK).

Belongs to the ligand-gated ion channel (TC 1.A.9) family. Acetylcholine receptor (TC 1.A.9.1) subfamily. Alpha-5/CHRNA5 sub-subfamily. In terms of assembly, neuronal AChR that forms heteropentamers composed of two different type of subunits: alpha and non-alpha (beta). CHRNA5/alpha-5 subunit is only able to form functional nAChRs when co-assembled with another alpha subunit, can be combined to CHRNA4/alpha-4 or CHRNA3/alpha-3 and CHRNB4/beta-4 or CHRNB2/beta-2 to give rise to functional receptors. Interacts with LYPD6.

It is found in the synaptic cell membrane. It localises to the cell membrane. The enzyme catalyses Ca(2+)(in) = Ca(2+)(out). It catalyses the reaction K(+)(in) = K(+)(out). The catalysed reaction is Na(+)(in) = Na(+)(out). With respect to regulation, activated by a myriad of ligands such as acetylcholine, cytisine, nicotine, choline and epibatidine. Its function is as follows. Component of neuronal acetylcholine receptors (nAChRs) that function as pentameric, ligand-gated cation channels with high calcium permeability among other activities. nAChRs are excitatory neurotrasnmitter receptors formed by a collection of nAChR subunits known to mediate synaptic transmission in the nervous system and the neuromuscular junction. Each nAchR subunit confers differential attributes to channel properties, including activation, deactivation and desensitization kinetics, pH sensitivity, cation permeability, and binding to allosteric modulators. Has an accessory rather than functional role and is only able to form functional nAChRs when co-assembled with another beta subunit. Participates in pentameric assemblies along with CHRNA3, CHRNA4, CHRNB2 and CHRNB4. Increases receptor sensitivity to acetylcholine and nicotine when associated with CHRNA4 and CHRNB2. Plays a role in nicotine addiction. The chain is Neuronal acetylcholine receptor subunit alpha-5 (CHRNA5) from Bos taurus (Bovine).